Reading from the N-terminus, the 331-residue chain is MAKVYYDEDANLELLRGKTVAIIGYGSQGHAHALNLKDSGVNVIVGLYEGSKSRKIAESQGLQVLNTKDAVKNADVIMMLIPDEKQAKVYMEDVCMNLKEGDALVFAHGFNIHFNQIVPPEYVDVYMIAPKGPGHMVRREYVRGGGVPCLVAVAQDYTGKAKEYALAYTKGIGGTKGGVLETTFKDETETDLFGEQAVLCGGLTALMKAGFETLVEAGYAPENAYFECVHEMKLIVDLIYEGGFNSMRHSISDTAEFGEYSVGNRIVTEETKKEMKKVLREIQDGTFANAWLVENQVNRPKFNAKRRIESEHPIEKVGVELRAMMPWLKEN.

Residues 2 to 182 (AKVYYDEDAN…GGTKGGVLET (181 aa)) enclose the KARI N-terminal Rossmann domain. NADP(+)-binding positions include 25–28 (YGSQ), serine 51, serine 53, and 83–86 (DEKQ). Residue histidine 108 is part of the active site. NADP(+) is bound at residue glycine 134. In terms of domain architecture, KARI C-terminal knotted spans 183 to 328 (TFKDETETDL…VELRAMMPWL (146 aa)). Aspartate 191, glutamate 195, glutamate 227, and glutamate 231 together coordinate Mg(2+). A substrate-binding site is contributed by serine 252.

The protein belongs to the ketol-acid reductoisomerase family. It depends on Mg(2+) as a cofactor.

It carries out the reaction (2R)-2,3-dihydroxy-3-methylbutanoate + NADP(+) = (2S)-2-acetolactate + NADPH + H(+). The catalysed reaction is (2R,3R)-2,3-dihydroxy-3-methylpentanoate + NADP(+) = (S)-2-ethyl-2-hydroxy-3-oxobutanoate + NADPH + H(+). Its pathway is amino-acid biosynthesis; L-isoleucine biosynthesis; L-isoleucine from 2-oxobutanoate: step 2/4. The protein operates within amino-acid biosynthesis; L-valine biosynthesis; L-valine from pyruvate: step 2/4. In terms of biological role, involved in the biosynthesis of branched-chain amino acids (BCAA). Catalyzes an alkyl-migration followed by a ketol-acid reduction of (S)-2-acetolactate (S2AL) to yield (R)-2,3-dihydroxy-isovalerate. In the isomerase reaction, S2AL is rearranged via a Mg-dependent methyl migration to produce 3-hydroxy-3-methyl-2-ketobutyrate (HMKB). In the reductase reaction, this 2-ketoacid undergoes a metal-dependent reduction by NADPH to yield (R)-2,3-dihydroxy-isovalerate. The sequence is that of Ketol-acid reductoisomerase (NADP(+)) from Clostridium novyi (strain NT).